Reading from the N-terminus, the 603-residue chain is DNA mismatch repair protein MutL (603 aa).

Belongs to the DNA mismatch repair MutL/HexB family.

This protein is involved in the repair of mismatches in DNA. It is required for dam-dependent methyl-directed DNA mismatch repair. May act as a 'molecular matchmaker', a protein that promotes the formation of a stable complex between two or more DNA-binding proteins in an ATP-dependent manner without itself being part of a final effector complex. This Rhodopseudomonas palustris (strain BisA53) protein is DNA mismatch repair protein MutL.